Consider the following 214-residue polypeptide: Small ribosomal subunit protein eS6 (214 aa).

This sequence belongs to the eukaryotic ribosomal protein eS6 family.

This is Small ribosomal subunit protein eS6 from Saccharolobus islandicus (strain L.S.2.15 / Lassen #1) (Sulfolobus islandicus).